We begin with the raw amino-acid sequence, 270 residues long: MVKVAVTGALGRMGSGIIQKILETEGLNVVAAIDIPNHPKKGHDIGELIGIGKLGVNLSTSDELESVLKSSGAEVLVDFTAPAPCVNTAKIASKCGVNLVIGTTGFTKEQKDEMEKAIFENKVAATISQNYAVGVNIFFKTLELLAQKLGEYDIEIVEMHHKFKKDAPSGTALRAAEIIQENLNRNSNLIYGREGITGERTKEEICIHALRGGDVVGDHTVIFANDGERLELSHKASSRQSFIAGVILAIKFVGTKKEGIFNTFDVLGLN.

Residues 8–13 (GALGRM), Asp34, 102–104 (GTT), and 128–131 (SQNY) contribute to the NAD(+) site. His160 acts as the Proton donor/acceptor in catalysis. Residue His161 coordinates (S)-2,3,4,5-tetrahydrodipicolinate. Lys164 serves as the catalytic Proton donor. 170 to 171 (GT) lines the (S)-2,3,4,5-tetrahydrodipicolinate pocket.

This sequence belongs to the DapB family.

The protein resides in the cytoplasm. The enzyme catalyses (S)-2,3,4,5-tetrahydrodipicolinate + NAD(+) + H2O = (2S,4S)-4-hydroxy-2,3,4,5-tetrahydrodipicolinate + NADH + H(+). The catalysed reaction is (S)-2,3,4,5-tetrahydrodipicolinate + NADP(+) + H2O = (2S,4S)-4-hydroxy-2,3,4,5-tetrahydrodipicolinate + NADPH + H(+). It functions in the pathway amino-acid biosynthesis; L-lysine biosynthesis via DAP pathway; (S)-tetrahydrodipicolinate from L-aspartate: step 4/4. Functionally, catalyzes the conversion of 4-hydroxy-tetrahydrodipicolinate (HTPA) to tetrahydrodipicolinate. The protein is 4-hydroxy-tetrahydrodipicolinate reductase of Methanococcus vannielii (strain ATCC 35089 / DSM 1224 / JCM 13029 / OCM 148 / SB).